Consider the following 237-residue polypeptide: Sugar fermentation stimulation protein homolog (237 aa).

Belongs to the SfsA family.

The chain is Sugar fermentation stimulation protein homolog from Pseudomonas syringae pv. syringae (strain B728a).